The following is a 578-amino-acid chain: Hemolysin 4 (578 aa).

The tract at residues Lys289–Glu322 is disordered. Residues Arg448 to Leu539 form the Ricin B-type lectin domain.

Belongs to the HlyA hemolysin family.

Bacterial hemolysins are exotoxins that attack blood cell membranes and cause cell rupture by mechanisms not clearly defined. This Aeromonas salmonicida protein is Hemolysin 4 (ash4).